The primary structure comprises 158 residues: Low molecular weight phosphotyrosine protein phosphatase (158 aa).

Ala-2 is modified (N-acetylalanine). Cys-13 serves as the catalytic Nucleophile. Arg-19 is an active-site residue. Residue Asp-130 is the Proton donor of the active site. Residues Tyr-132 and Tyr-133 each carry the phosphotyrosine modification.

Belongs to the low molecular weight phosphotyrosine protein phosphatase family. As to quaternary structure, interacts with EPHA2; dephosphorylates EPHA2. Interacts with EPHB1. Interacts with the SH3 domain of SPTAN1. Phosphorylated by LCK. Phosphorylation at Tyr-132 increases its phosphatase activity.

It localises to the cytoplasm. It catalyses the reaction O-phospho-L-tyrosyl-[protein] + H2O = L-tyrosyl-[protein] + phosphate. The enzyme catalyses a phosphate monoester + H2O = an alcohol + phosphate. Its activity is regulated as follows. Inhibited by sulfhydryl reagents. In terms of biological role, acts on tyrosine phosphorylated proteins, low-MW aryl phosphates and natural and synthetic acyl phosphates with differences in substrate specificity between isoform 1 and isoform 2. The sequence is that of Low molecular weight phosphotyrosine protein phosphatase (ACP1) from Sus scrofa (Pig).